The chain runs to 387 residues: 3-ketoacyl-CoA thiolase (387 aa).

The Acyl-thioester intermediate role is filled by Cys91. Catalysis depends on proton acceptor residues His343 and Cys373.

It belongs to the thiolase-like superfamily. Thiolase family. Heterotetramer of two alpha chains (FadB) and two beta chains (FadA).

The protein resides in the cytoplasm. It catalyses the reaction an acyl-CoA + acetyl-CoA = a 3-oxoacyl-CoA + CoA. It functions in the pathway lipid metabolism; fatty acid beta-oxidation. In terms of biological role, catalyzes the final step of fatty acid oxidation in which acetyl-CoA is released and the CoA ester of a fatty acid two carbons shorter is formed. This is 3-ketoacyl-CoA thiolase from Escherichia coli O9:H4 (strain HS).